Consider the following 552-residue polypeptide: Kumamolisin (552 aa).

The span at 1–17 (MSDMEKPWKEEEKREVL) shows a compositional bias: basic and acidic residues. The interval 1 to 34 (MSDMEKPWKEEEKREVLAGHARRQAPQAVDKGPV) is disordered. In terms of domain architecture, Peptidase S53 spans 193–546 (AYTPLDVAQA…IRLLQALLPS (354 aa)). Active-site charge relay system residues include E266, D270, and S466. Residues D504, I505, G522, G524, and D526 each coordinate Ca(2+).

As to quaternary structure, forms monomeric and dimeric crystals. The cofactor is Ca(2+). Post-translationally, autocatalytically processed.

It localises to the secreted. It carries out the reaction The enzyme preferentially hydrolyzes peptides having an Ala or Pro residue at P2 position and prefers such charged amino acid residues as Glu or Arg at the P2' position. In the oxidized insulin B chain, kumamolysin preferentially cleaves between Leu(15) and Tyr(16).. With respect to regulation, inactivated at 22.4 and 37 degrees Celsius, but not at 60 degrees Celsius, by aldehyde-type inhibitors such as acetyl-Ile-Ala-Phe-CHO and acetyl-Ile-Pro-Phe-CHO. Insensitive to the known carboxyl proteinase inhibitors pepstatin, diazoacetyl-DL-norleucine methyl ester (DAN) and 1,2-epoxy-3-(p-nitrophenoxy)propane (EPNP). Not inhibited by Ala-Ala-Phe-chloromethylketone, an inhibitor of the human tripeptidyl-peptidase 1. Its function is as follows. Thermostable pepstatin-insensitive serine-carboxyl proteinase. Preferentially hydrolyzes synthetic peptides having an Ala or Pro residue at the P2 position and charged amino acids such as Glu or Arg at the P2' position. In vitro, specifically hydrolyzes the Leu-15-Tyr-16 peptide bond in oxidized insulin B-chain. Additional cleavage of oxidized insulin B-chain at Phe-25-Tyr-26 is detected at a considerably lower rate. Can hydrolyze collagen and the chromogenic substrate azocoll. Shows lower activity with albumin and casein. Shows very weak tripeptidyl peptidase activity. This chain is Kumamolisin, found in Bacillus sp. (strain MN-32).